Reading from the N-terminus, the 509-residue chain is Transmembrane protein 102 (509 aa).

The Extracellular portion of the chain corresponds to 1-312 (MASTVWGGAP…VLLATPEPPR (312 aa)). The segment at 167 to 236 (PPVPEESDMT…NPETPEPLET (70 aa)) is disordered. A compositionally biased stretch (basic and acidic residues) spans 174-204 (DMTHQTHSKESPTDRENSVDPSHDYVPEPEP). The segment covering 207 to 224 (SLQKSSSDLSESQSSYKD) has biased composition (low complexity). A helical membrane pass occupies residues 313–329 (HLLLFDLIPVVTVTGWP). Topologically, residues 330–509 (DTARSHSWAG…GLAGVGGGTH (180 aa)) are cytoplasmic.

Interacts with CSF2RB; this interaction occurs preferentially in the absence of CSF2.

The protein localises to the cell membrane. Its function is as follows. Selectively involved in CSF2 deprivation-induced apoptosis via a mitochondria-dependent pathway. The chain is Transmembrane protein 102 (Tmem102) from Mus musculus (Mouse).